Here is a 279-residue protein sequence, read N- to C-terminus: MPPKRNFRKRSFEEEEEDNDVNKAAISEEEEKRRLALEEVKFLQKLRERKLGIPALSSTAQSSIGKVKPVEKTETEGEKEELVLQDTFAQETAVLIEDPNMVKYIEQELAKKRGRNIDDAEEVENELKRVEDELYKIPDHLKVKKRSSEESSTQWTTGIAEVQLPIEYKLKNIEETEAAKKLLQERRLMGRPKSEFSIPSSYSADYFQRGKDYAEKLRREHPELYKDRGGPQADGEAAKPSTSSSTNNNADSGKSRQAATDQIMLERFRKRERNRVMRR.

Disordered regions lie at residues 1-29 and 57-79; these read MPPK…ISEE and SSTA…EGEK. A compositionally biased stretch (basic and acidic residues) spans 68–79; the sequence is KPVEKTETEGEK. Positions 86 to 183 form a coiled coil; the sequence is DTFAQETAVL…EETEAAKKLL (98 aa). The segment covering 217 to 229 has biased composition (basic and acidic residues); that stretch reads LRREHPELYKDRG. The tract at residues 217–279 is disordered; it reads LRREHPELYK…KRERNRVMRR (63 aa). Positions 250 to 260 are enriched in polar residues; that stretch reads ADSGKSRQAAT. A compositionally biased stretch (basic residues) spans 270–279; the sequence is KRERNRVMRR.

Belongs to the TLS1 family. As to quaternary structure, interacts with COP1.

Its subcellular location is the nucleus. It is found in the nucleus speckle. Inhibits E3 ubiquitin-protein ligase activity of COP1, a central repressor of seedling photomorphogenesis. Represses COP1-mediated turnover of HY5 in the dark. Required for primary root development under normal light growth conditions. The protein is Protein COP1 SUPPRESSOR 2 of Arabidopsis thaliana (Mouse-ear cress).